A 476-amino-acid polypeptide reads, in one-letter code: 1-aminocyclopropane-1-carboxylate synthase 4 (476 aa).

An N6-(pyridoxal phosphate)lysine modification is found at Lys-282.

The protein belongs to the class-I pyridoxal-phosphate-dependent aminotransferase family. As to quaternary structure, homodimer. Pyridoxal 5'-phosphate serves as cofactor.

The catalysed reaction is S-adenosyl-L-methionine = 1-aminocyclopropane-1-carboxylate + S-methyl-5'-thioadenosine + H(+). It participates in alkene biosynthesis; ethylene biosynthesis via S-adenosyl-L-methionine; ethylene from S-adenosyl-L-methionine: step 1/2. Functionally, catalyzes the formation of 1-aminocyclopropane-1-carboxylate, a direct precursor of ethylene in higher plants. The sequence is that of 1-aminocyclopropane-1-carboxylate synthase 4 (ACS4) from Solanum lycopersicum (Tomato).